A 139-amino-acid chain; its full sequence is uncharacterized protein (139 aa).

The segment at 1–116 is disordered; the sequence is MYNPWQVGAS…TRPRVVARGK (116 aa). Low complexity-rich tracts occupy residues 50 to 70 and 84 to 110; these read RPRP…GPRP and LPAY…TRPR.

This is an uncharacterized protein from Homo sapiens (Human).